A 367-amino-acid chain; its full sequence is UDP-N-acetylglucosamine--N-acetylmuramyl-(pentapeptide) pyrophosphoryl-undecaprenol N-acetylglucosamine transferase (367 aa).

UDP-N-acetyl-alpha-D-glucosamine-binding positions include 15–17 (TGG), N127, R163, S191, I249, and Q294.

This sequence belongs to the glycosyltransferase 28 family. MurG subfamily.

The protein localises to the cell inner membrane. The enzyme catalyses di-trans,octa-cis-undecaprenyl diphospho-N-acetyl-alpha-D-muramoyl-L-alanyl-D-glutamyl-meso-2,6-diaminopimeloyl-D-alanyl-D-alanine + UDP-N-acetyl-alpha-D-glucosamine = di-trans,octa-cis-undecaprenyl diphospho-[N-acetyl-alpha-D-glucosaminyl-(1-&gt;4)]-N-acetyl-alpha-D-muramoyl-L-alanyl-D-glutamyl-meso-2,6-diaminopimeloyl-D-alanyl-D-alanine + UDP + H(+). It participates in cell wall biogenesis; peptidoglycan biosynthesis. Its function is as follows. Cell wall formation. Catalyzes the transfer of a GlcNAc subunit on undecaprenyl-pyrophosphoryl-MurNAc-pentapeptide (lipid intermediate I) to form undecaprenyl-pyrophosphoryl-MurNAc-(pentapeptide)GlcNAc (lipid intermediate II). This is UDP-N-acetylglucosamine--N-acetylmuramyl-(pentapeptide) pyrophosphoryl-undecaprenol N-acetylglucosamine transferase from Burkholderia pseudomallei (strain 1710b).